Consider the following 224-residue polypeptide: MAISDWPEAERPREKLIEKGAAALSDAELLAIFLRTGITGVSAVELARKLLTHFGSLTKLCAASLHEFSELPGMGPAKFAQLQAVMEMAKRALAEELKNGDIMDSPQSVRNYLCLSLKGKPYEVFVGIFLDARHRTIVTEELFNGTLTQASVYPREVVKRALYHNAAAMIFAHNHPSGIAEPSTADEILTQSLKQALALVDVKVLDHFVIGSSEVVSFAERGLI.

An MPN domain is found at 102 to 224 (IMDSPQSVRN…VVSFAERGLI (123 aa)). Zn(2+) contacts are provided by histidine 173, histidine 175, and aspartate 186. Positions 173 to 186 (HNHPSGIAEPSTAD) match the JAMM motif motif.

Belongs to the UPF0758 family.

This chain is UPF0758 protein NE1464, found in Nitrosomonas europaea (strain ATCC 19718 / CIP 103999 / KCTC 2705 / NBRC 14298).